We begin with the raw amino-acid sequence, 127 residues long: uncharacterized protein (127 aa).

The protein resides in the mitochondrion. This is an uncharacterized protein from Arabidopsis thaliana (Mouse-ear cress).